Consider the following 194-residue polypeptide: Imidazoleglycerol-phosphate dehydratase (194 aa).

The protein belongs to the imidazoleglycerol-phosphate dehydratase family.

The protein localises to the cytoplasm. It catalyses the reaction D-erythro-1-(imidazol-4-yl)glycerol 3-phosphate = 3-(imidazol-4-yl)-2-oxopropyl phosphate + H2O. The protein operates within amino-acid biosynthesis; L-histidine biosynthesis; L-histidine from 5-phospho-alpha-D-ribose 1-diphosphate: step 6/9. This Thermoanaerobacter pseudethanolicus (strain ATCC 33223 / 39E) (Clostridium thermohydrosulfuricum) protein is Imidazoleglycerol-phosphate dehydratase.